Consider the following 509-residue polypeptide: Cytochrome P450 4A10 (509 aa).

2 helical membrane-spanning segments follow: residues 15 to 35 and 121 to 141; these read LSGF…VKAV and LLAP…WFQH. E320 provides a ligand contact to heme. S439 is subject to Phosphoserine. C456 lines the heme pocket.

The protein belongs to the cytochrome P450 family. Requires heme as cofactor. In terms of tissue distribution, highly expressed in the kidneys of both genders.

The protein localises to the endoplasmic reticulum membrane. The protein resides in the microsome membrane. It carries out the reaction an omega-methyl-long-chain fatty acid + reduced [NADPH--hemoprotein reductase] + O2 = an omega-hydroxy-long-chain fatty acid + oxidized [NADPH--hemoprotein reductase] + H2O + H(+). The catalysed reaction is dodecanoate + reduced [NADPH--hemoprotein reductase] + O2 = 12-hydroxydodecanoate + oxidized [NADPH--hemoprotein reductase] + H2O + H(+). The enzyme catalyses dodecanoate + reduced [NADPH--hemoprotein reductase] + O2 = 11-hydroxydodecanoate + oxidized [NADPH--hemoprotein reductase] + H2O + H(+). It catalyses the reaction tetradecanoate + reduced [NADPH--hemoprotein reductase] + O2 = 14-hydroxytetradecanoate + oxidized [NADPH--hemoprotein reductase] + H2O + H(+). It carries out the reaction hexadecanoate + reduced [NADPH--hemoprotein reductase] + O2 = 16-hydroxyhexadecanoate + oxidized [NADPH--hemoprotein reductase] + H2O + H(+). The catalysed reaction is (9Z)-octadecenoate + reduced [NADPH--hemoprotein reductase] + O2 = 18-hydroxy-(9Z)-octadecenoate + oxidized [NADPH--hemoprotein reductase] + H2O + H(+). The enzyme catalyses (9Z,12Z)-octadecadienoate + reduced [NADPH--hemoprotein reductase] + O2 = 18-hydroxy-(9Z,12Z)-octadecadienoate + oxidized [NADPH--hemoprotein reductase] + H2O + H(+). It catalyses the reaction (9Z,12Z)-octadecadienoate + reduced [NADPH--hemoprotein reductase] + O2 = 17-hydroxy-(9Z,12Z)-octadecadienoate + oxidized [NADPH--hemoprotein reductase] + H2O + H(+). It carries out the reaction (5Z,8Z,11Z,14Z)-eicosatetraenoate + reduced [NADPH--hemoprotein reductase] + O2 = 20-hydroxy-(5Z,8Z,11Z,14Z)-eicosatetraenoate + oxidized [NADPH--hemoprotein reductase] + H2O + H(+). The catalysed reaction is 8,9-epoxy-(5Z,11Z,14Z)-eicosatrienoate + reduced [NADPH--hemoprotein reductase] + O2 = 20-hydroxy-8,9-epoxy-(5Z,11Z,14Z)-eicosatrienoate + oxidized [NADPH--hemoprotein reductase] + H2O + H(+). A cytochrome P450 monooxygenase involved in the metabolism of fatty acids. Catalyzes predominantly the oxidation of the terminal carbon (omega-oxidation) of long-chain fatty acids. Acts as a major omega-hydroxylase for dodecanoic (lauric) acid in liver. In kidney, may play an important role in omega-hydroxylation of (5Z,8Z,11Z,14Z)-eicosatetraenoic acid (arachidonate) to 20-hydroxyeicosatetraenoic acid (20-HETE), a signaling molecule acting both as vasoconstrictive and natriuretic with overall effect on arterial blood pressure. Also participates in the formation of anti-inflammatory hydroxyepoxyeicosatrienoic acids (HEETs) in kidney by converting 8,9-epoxyeicosatrienoic acid (EET) to 20,8,9-HEET, an activator of PPARA. Displays substantially lower fatty acid omega-1 hydroxylase activity. Mechanistically, uses molecular oxygen inserting one oxygen atom into a substrate, and reducing the second into a water molecule, with two electrons provided by NADPH via cytochrome P450 reductase (CPR; NADPH-ferrihemoprotein reductase). The chain is Cytochrome P450 4A10 from Mus musculus (Mouse).